Here is a 109-residue protein sequence, read N- to C-terminus: T-cell surface glycoprotein CD1b (109 aa).

The signal sequence occupies residues 1–18 (MLLLPLLLLAGRFPGGDN). 2 N-linked (GlcNAc...) asparagine glycosylation sites follow: Asn38 and Asn75.

Heterodimer with B2M (beta-2-microglobulin). Interacts with saposin C. In terms of tissue distribution, expressed on cortical thymocytes, on certain T-cell leukemias, and in various other tissues.

The protein localises to the cell membrane. Its subcellular location is the endosome membrane. It localises to the lysosome membrane. Antigen-presenting protein that binds self and non-self lipid and glycolipid antigens and presents them to T-cell receptors on natural killer T-cells. This Oryctolagus cuniculus (Rabbit) protein is T-cell surface glycoprotein CD1b (CD1B).